The following is a 133-amino-acid chain: Ribonucleases P/MRP protein subunit POP8 (133 aa).

As to quaternary structure, component of nuclear RNase P and RNase MRP complexes. RNase P consists of an RNA moiety and at least 9 protein subunits including POP1, POP3, POP4, POP5, POP6, POP7, POP8, RPP1 and RPR2. RNase MRP complex consists of an RNA moiety and at least 10 protein subunits including POP1, POP3, POP4, POP5, POP6, POP7, POP8, RMP1, RPP1 and SNM1, many of which are shared with the RNase P complex.

Its subcellular location is the nucleus. It catalyses the reaction Endonucleolytic cleavage of RNA, removing 5'-extranucleotides from tRNA precursor.. In terms of biological role, component of ribonuclease P, a protein complex that generates mature tRNA molecules by cleaving their 5'-ends. Also a component of RNase MRP, which cleaves pre-rRNA sequences. This Saccharomyces cerevisiae (strain ATCC 204508 / S288c) (Baker's yeast) protein is Ribonucleases P/MRP protein subunit POP8 (POP8).